The following is a 310-amino-acid chain: Mitochondrial 2-oxodicarboxylate carrier 1 (310 aa).

A run of 6 helical transmembrane segments spans residues 9–29, 78–97, 126–146, 179–199, 219–239, and 281–301; these read LPFI…LLVM, SHLY…KRAI, IYSG…FELV, GLEA…GIIF, LIAG…FDVV, and MRLA…MDFF. Solcar repeat units lie at residues 9–108, 120–204, and 213–300; these read LPFI…FQTF, MTQK…IRKL, and EKTR…VMDF.

The protein belongs to the mitochondrial carrier (TC 2.A.29) family.

The protein localises to the mitochondrion inner membrane. In terms of biological role, transports C5-C7 oxodicarboxylates across the inner membranes of mitochondria. Can transport 2-oxoadipate, 2-oxoglutarate, adipate, glutarate, 2-oxopimelate, oxaloacetate, citrate and malate. The main physiological role is probably to supply 2-oxoadipate and 2-oxoglutarate from the mitochondrial matrix to the cytosol where they are used in the biosynthesis of lysine and glutamate, respectively, and in lysine catabolism. The chain is Mitochondrial 2-oxodicarboxylate carrier 1 (ODC1) from Saccharomyces cerevisiae (strain ATCC 204508 / S288c) (Baker's yeast).